The chain runs to 301 residues: HTH-type transcriptional regulator EstR (301 aa).

An HTH lysR-type domain is found at 5–62; sequence PSLRQLSYLVTLSETLHFTEAARRSFVTQSTLSGGIMELERLLGGVLVERDRQNVRLT. Positions 22 to 41 form a DNA-binding region, H-T-H motif; sequence FTEAARRSFVTQSTLSGGIM.

Belongs to the LysR transcriptional regulatory family.

Transcriptional regulator of the esterase operon. This chain is HTH-type transcriptional regulator EstR (estR), found in Acinetobacter baylyi (strain ATCC 33305 / BD413 / ADP1).